The chain runs to 176 residues: Methylated-DNA--protein-cysteine methyltransferase (176 aa).

Residue Cys142 is the Nucleophile; methyl group acceptor of the active site.

This sequence belongs to the MGMT family.

It localises to the cytoplasm. The catalysed reaction is a 6-O-methyl-2'-deoxyguanosine in DNA + L-cysteinyl-[protein] = S-methyl-L-cysteinyl-[protein] + a 2'-deoxyguanosine in DNA. It catalyses the reaction a 4-O-methyl-thymidine in DNA + L-cysteinyl-[protein] = a thymidine in DNA + S-methyl-L-cysteinyl-[protein]. Involved in the cellular defense against the biological effects of O6-methylguanine (O6-MeG) and O4-methylthymine (O4-MeT) in DNA. Repairs the methylated nucleobase in DNA by stoichiometrically transferring the methyl group to a cysteine residue in the enzyme. This is a suicide reaction: the enzyme is irreversibly inactivated. The protein is Methylated-DNA--protein-cysteine methyltransferase of Methanothermobacter thermautotrophicus (strain ATCC 29096 / DSM 1053 / JCM 10044 / NBRC 100330 / Delta H) (Methanobacterium thermoautotrophicum).